The following is a 276-amino-acid chain: CTD small phosphatase-like protein (276 aa).

A disordered region spans residues methionine 1–glutamate 25. An FCP1 homology domain is found at leucine 102–leucine 260. Residue aspartate 112 is the 4-aspartylphosphate intermediate of the active site. The Mg(2+) site is built by aspartate 112, aspartate 114, and asparagine 223. The active-site Proton donor is the aspartate 114.

As to quaternary structure, interacts with REST. Monomer. The cofactor is Mg(2+). Expression is restricted to non-neuronal tissues.

It is found in the nucleus. The enzyme catalyses O-phospho-L-seryl-[protein] + H2O = L-seryl-[protein] + phosphate. It catalyses the reaction O-phospho-L-threonyl-[protein] + H2O = L-threonyl-[protein] + phosphate. Functionally, recruited by REST to neuronal genes that contain RE-1 elements, leading to neuronal gene silencing in non-neuronal cells. Preferentially catalyzes the dephosphorylation of 'Ser-5' within the tandem 7 residue repeats in the C-terminal domain (CTD) of the largest RNA polymerase II subunit POLR2A. Negatively regulates RNA polymerase II transcription, possibly by controlling the transition from initiation/capping to processive transcript elongation. The protein is CTD small phosphatase-like protein (CTDSPL) of Homo sapiens (Human).